The primary structure comprises 225 residues: uncharacterized protein (225 aa).

The next 6 helical transmembrane spans lie at Met1–Val21, Ser31–Tyr51, Leu56–Leu76, Val88–Ile108, Val145–Ile165, and Val205–Met225.

It belongs to the YohK (E.coli)/YwbG (IPA-22R) (B.subtilis) family.

The protein localises to the cell membrane. This is an uncharacterized protein from Bacillus subtilis (strain 168).